A 379-amino-acid chain; its full sequence is Chaperone protein DnaJ (379 aa).

The region spanning 5 to 70 (DYYETLGCDR…QKRAAYDRFG (66 aa)) is the J domain. Residues 134-212 (GKTAQIKIPT…CGGAGRVTRE (79 aa)) form a CR-type zinc finger. Positions 147, 150, 164, 167, 186, 189, 200, and 203 each coordinate Zn(2+). 4 CXXCXGXG motif repeats span residues 147-154 (CETCSGTG), 164-171 (CRMCGGAG), 186-193 (CPNCQGRG), and 200-207 (CSDCGGAG).

Belongs to the DnaJ family. As to quaternary structure, homodimer. Zn(2+) is required as a cofactor.

It is found in the cytoplasm. Functionally, participates actively in the response to hyperosmotic and heat shock by preventing the aggregation of stress-denatured proteins and by disaggregating proteins, also in an autonomous, DnaK-independent fashion. Unfolded proteins bind initially to DnaJ; upon interaction with the DnaJ-bound protein, DnaK hydrolyzes its bound ATP, resulting in the formation of a stable complex. GrpE releases ADP from DnaK; ATP binding to DnaK triggers the release of the substrate protein, thus completing the reaction cycle. Several rounds of ATP-dependent interactions between DnaJ, DnaK and GrpE are required for fully efficient folding. Also involved, together with DnaK and GrpE, in the DNA replication of plasmids through activation of initiation proteins. In Xanthobacter autotrophicus (strain ATCC BAA-1158 / Py2), this protein is Chaperone protein DnaJ.